Consider the following 466-residue polypeptide: 3-isopropylmalate dehydratase large subunit (466 aa).

Cysteine 347, cysteine 407, and cysteine 410 together coordinate [4Fe-4S] cluster.

This sequence belongs to the aconitase/IPM isomerase family. LeuC type 1 subfamily. In terms of assembly, heterodimer of LeuC and LeuD. [4Fe-4S] cluster serves as cofactor.

The catalysed reaction is (2R,3S)-3-isopropylmalate = (2S)-2-isopropylmalate. The protein operates within amino-acid biosynthesis; L-leucine biosynthesis; L-leucine from 3-methyl-2-oxobutanoate: step 2/4. Its function is as follows. Catalyzes the isomerization between 2-isopropylmalate and 3-isopropylmalate, via the formation of 2-isopropylmaleate. In Shigella boydii serotype 4 (strain Sb227), this protein is 3-isopropylmalate dehydratase large subunit.